The following is a 431-amino-acid chain: Gamma-glutamyl phosphate reductase (431 aa).

It belongs to the gamma-glutamyl phosphate reductase family.

It localises to the cytoplasm. It catalyses the reaction L-glutamate 5-semialdehyde + phosphate + NADP(+) = L-glutamyl 5-phosphate + NADPH + H(+). It participates in amino-acid biosynthesis; L-proline biosynthesis; L-glutamate 5-semialdehyde from L-glutamate: step 2/2. In terms of biological role, catalyzes the NADPH-dependent reduction of L-glutamate 5-phosphate into L-glutamate 5-semialdehyde and phosphate. The product spontaneously undergoes cyclization to form 1-pyrroline-5-carboxylate. In Acaryochloris marina (strain MBIC 11017), this protein is Gamma-glutamyl phosphate reductase.